Consider the following 203-residue polypeptide: Type III effector protein HopBF1 (203 aa).

Residues 1 to 23 form a disordered region; that stretch reads MFNVSNNVAPSRYQGPSSTSVTP. Ser40, Gln41, Lys42, Asp107, Ile109, and Asp114 together coordinate ATP. Asp155 is a catalytic residue. Gln157 provides a ligand contact to ATP.

It belongs to the HopBF1 family.

The protein resides in the secreted. It is found in the host cell. The enzyme catalyses L-seryl-[protein] + ATP = O-phospho-L-seryl-[protein] + ADP + H(+). Its function is as follows. Effector protein that targets and inactivates the eukaryotic molecular chaperone HSP90 during infection. HopBF1 is recognized by HSP90 as a host client. As a result, HopBF1 phosphorylates HSP90, leading to the inactivation of the HSP90 ATPase activity and chaperone function. In vitro, can phosphorylate the recombinant yeast HSP82 (HSP90) and human HSP 90-beta on Ser-108. The polypeptide is Type III effector protein HopBF1 (Ewingella americana (strain ATCC 33852 / DSM 4580 / CCUG 14506 / JCM 5911 / LMG 7869 / NCTC 12157 / CDC 1468-78)).